Here is a 372-residue protein sequence, read N- to C-terminus: Glutamate 5-kinase (372 aa).

K14 serves as a coordination point for ATP. Substrate-binding residues include S54, D141, and N153. Residue 173–174 (TD) participates in ATP binding. The PUA domain occupies 280–358 (RGHVVIDAGA…GEIEAVLGYM (79 aa)).

This sequence belongs to the glutamate 5-kinase family.

It localises to the cytoplasm. It catalyses the reaction L-glutamate + ATP = L-glutamyl 5-phosphate + ADP. It functions in the pathway amino-acid biosynthesis; L-proline biosynthesis; L-glutamate 5-semialdehyde from L-glutamate: step 1/2. Catalyzes the transfer of a phosphate group to glutamate to form L-glutamate 5-phosphate. The protein is Glutamate 5-kinase of Burkholderia thailandensis (strain ATCC 700388 / DSM 13276 / CCUG 48851 / CIP 106301 / E264).